A 165-amino-acid chain; its full sequence is Large ribosomal subunit protein uL11 (165 aa).

Position 38 is a phosphoserine (Ser-38). Residue Lys-40 forms a Glycyl lysine isopeptide (Lys-Gly) (interchain with G-Cter in SUMO2) linkage. Lys-48 participates in a covalent cross-link: Glycyl lysine isopeptide (Lys-Gly) (interchain with G-Cter in ubiquitin). At Lys-54 the chain carries N6-acetyllysine. Lys-83 is covalently cross-linked (Glycyl lysine isopeptide (Lys-Gly) (interchain with G-Cter in ubiquitin)). Ser-165 bears the Phosphoserine mark.

Belongs to the universal ribosomal protein uL11 family. Component of the large ribosomal subunit. Mature ribosomes consist of a small (40S) and a large (60S) subunit. The 40S subunit contains about 33 different proteins and 1 molecule of RNA (18S). The 60S subunit contains about 49 different proteins and 3 molecules of RNA (28S, 5.8S and 5S). Ubiquitinated at Lys-48 and Lys-83 by RNF14 and RNF25 in response to ribosome collisions (ribosome stalling).

It localises to the cytoplasm. Functionally, component of the large ribosomal subunit. The ribosome is a large ribonucleoprotein complex responsible for the synthesis of proteins in the cell. Binds directly to 26S ribosomal RNA. The polypeptide is Large ribosomal subunit protein uL11 (Rpl12) (Mus musculus (Mouse)).